We begin with the raw amino-acid sequence, 274 residues long: Large ribosomal subunit protein uL2 (274 aa).

Disordered regions lie at residues 1 to 23 (MAIK…SFEE) and 222 to 242 (GSAM…SPIG).

Belongs to the universal ribosomal protein uL2 family. In terms of assembly, part of the 50S ribosomal subunit. Forms a bridge to the 30S subunit in the 70S ribosome.

Functionally, one of the primary rRNA binding proteins. Required for association of the 30S and 50S subunits to form the 70S ribosome, for tRNA binding and peptide bond formation. It has been suggested to have peptidyltransferase activity; this is somewhat controversial. Makes several contacts with the 16S rRNA in the 70S ribosome. The chain is Large ribosomal subunit protein uL2 from Dehalococcoides mccartyi (strain ATCC BAA-2266 / KCTC 15142 / 195) (Dehalococcoides ethenogenes (strain 195)).